We begin with the raw amino-acid sequence, 114 residues long: Large ribosomal subunit protein bL19 (114 aa).

This sequence belongs to the bacterial ribosomal protein bL19 family.

This protein is located at the 30S-50S ribosomal subunit interface and may play a role in the structure and function of the aminoacyl-tRNA binding site. This chain is Large ribosomal subunit protein bL19, found in Acetivibrio thermocellus (strain ATCC 27405 / DSM 1237 / JCM 9322 / NBRC 103400 / NCIMB 10682 / NRRL B-4536 / VPI 7372) (Clostridium thermocellum).